The chain runs to 417 residues: D-inositol 3-phosphate glycosyltransferase (417 aa).

1D-myo-inositol 3-phosphate is bound at residue His10. UDP-N-acetyl-alpha-D-glucosamine-binding positions include 16-17 and Gly24; that span reads QP. Residues 21-26, Lys79, Tyr112, Thr136, and Arg156 each bind 1D-myo-inositol 3-phosphate; that span reads DAGGMN. The UDP-N-acetyl-alpha-D-glucosamine site is built by Arg230, Lys235, and Gln296. Mg(2+)-binding residues include Tyr305, Arg306, and Ala308. UDP-N-acetyl-alpha-D-glucosamine is bound by residues Glu318 and Glu326. A Mg(2+)-binding site is contributed by Thr332.

The protein belongs to the glycosyltransferase group 1 family. MshA subfamily. Homodimer.

It carries out the reaction 1D-myo-inositol 3-phosphate + UDP-N-acetyl-alpha-D-glucosamine = 1D-myo-inositol 2-acetamido-2-deoxy-alpha-D-glucopyranoside 3-phosphate + UDP + H(+). Catalyzes the transfer of a N-acetyl-glucosamine moiety to 1D-myo-inositol 3-phosphate to produce 1D-myo-inositol 2-acetamido-2-deoxy-glucopyranoside 3-phosphate in the mycothiol biosynthesis pathway. The chain is D-inositol 3-phosphate glycosyltransferase from Actinosynnema mirum (strain ATCC 29888 / DSM 43827 / JCM 3225 / NBRC 14064 / NCIMB 13271 / NRRL B-12336 / IMRU 3971 / 101).